We begin with the raw amino-acid sequence, 204 residues long: Elongation factor Ts (204 aa).

The involved in Mg(2+) ion dislocation from EF-Tu stretch occupies residues 80–83 (TDFV).

This sequence belongs to the EF-Ts family.

It is found in the cytoplasm. Functionally, associates with the EF-Tu.GDP complex and induces the exchange of GDP to GTP. It remains bound to the aminoacyl-tRNA.EF-Tu.GTP complex up to the GTP hydrolysis stage on the ribosome. This is Elongation factor Ts from Caldicellulosiruptor bescii (strain ATCC BAA-1888 / DSM 6725 / KCTC 15123 / Z-1320) (Anaerocellum thermophilum).